A 428-amino-acid chain; its full sequence is UPF0229 protein YeaH (428 aa).

The span at 77–90 (PGNDHFIQNDRIER) shows a compositional bias: basic and acidic residues. The interval 77–111 (PGNDHFIQNDRIERPQSGGGGGSGSGQGQASQDGE) is disordered. Positions 93–103 (SGGGGGSGSGQ) are enriched in gly residues.

The protein belongs to the UPF0229 family.

This Salmonella typhi protein is UPF0229 protein YeaH.